The primary structure comprises 460 residues: Cysteine--tRNA ligase (460 aa).

C28 is a binding site for Zn(2+). Residues 30–40 carry the 'HIGH' region motif; that stretch reads MTVYDYCHLGH. 3 residues coordinate Zn(2+): C209, H234, and E238. A 'KMSKS' region motif is present at residues 266–270; the sequence is KMSKS. K269 lines the ATP pocket.

It belongs to the class-I aminoacyl-tRNA synthetase family. As to quaternary structure, monomer. Requires Zn(2+) as cofactor.

Its subcellular location is the cytoplasm. It catalyses the reaction tRNA(Cys) + L-cysteine + ATP = L-cysteinyl-tRNA(Cys) + AMP + diphosphate. The protein is Cysteine--tRNA ligase of Pseudomonas fluorescens (strain ATCC BAA-477 / NRRL B-23932 / Pf-5).